We begin with the raw amino-acid sequence, 354 residues long: Holliday junction branch migration complex subunit RuvB (354 aa).

Residues 4–190 (TDKLAAERII…FGIVARLEFY (187 aa)) form a large ATPase domain (RuvB-L) region. ATP is bound by residues leucine 29, arginine 30, glycine 71, lysine 74, threonine 75, threonine 76, 137-139 (EDY), arginine 180, tyrosine 190, and arginine 227. Position 75 (threonine 75) interacts with Mg(2+). A small ATPAse domain (RuvB-S) region spans residues 191 to 261 (DADQLARIVR…VADAALAMLD (71 aa)). Residues 264-354 (PVGFDLMDRK…RGMWDTPAGK (91 aa)) form a head domain (RuvB-H) region. Arginine 300, arginine 319, and arginine 324 together coordinate DNA.

The protein belongs to the RuvB family. As to quaternary structure, homohexamer. Forms an RuvA(8)-RuvB(12)-Holliday junction (HJ) complex. HJ DNA is sandwiched between 2 RuvA tetramers; dsDNA enters through RuvA and exits via RuvB. An RuvB hexamer assembles on each DNA strand where it exits the tetramer. Each RuvB hexamer is contacted by two RuvA subunits (via domain III) on 2 adjacent RuvB subunits; this complex drives branch migration. In the full resolvosome a probable DNA-RuvA(4)-RuvB(12)-RuvC(2) complex forms which resolves the HJ.

The protein resides in the cytoplasm. The catalysed reaction is ATP + H2O = ADP + phosphate + H(+). The RuvA-RuvB-RuvC complex processes Holliday junction (HJ) DNA during genetic recombination and DNA repair, while the RuvA-RuvB complex plays an important role in the rescue of blocked DNA replication forks via replication fork reversal (RFR). RuvA specifically binds to HJ cruciform DNA, conferring on it an open structure. The RuvB hexamer acts as an ATP-dependent pump, pulling dsDNA into and through the RuvAB complex. RuvB forms 2 homohexamers on either side of HJ DNA bound by 1 or 2 RuvA tetramers; 4 subunits per hexamer contact DNA at a time. Coordinated motions by a converter formed by DNA-disengaged RuvB subunits stimulates ATP hydrolysis and nucleotide exchange. Immobilization of the converter enables RuvB to convert the ATP-contained energy into a lever motion, pulling 2 nucleotides of DNA out of the RuvA tetramer per ATP hydrolyzed, thus driving DNA branch migration. The RuvB motors rotate together with the DNA substrate, which together with the progressing nucleotide cycle form the mechanistic basis for DNA recombination by continuous HJ branch migration. Branch migration allows RuvC to scan DNA until it finds its consensus sequence, where it cleaves and resolves cruciform DNA. This is Holliday junction branch migration complex subunit RuvB from Burkholderia ambifaria (strain MC40-6).